The chain runs to 275 residues: MLCAICNVSSGNCAEDCAYCTQSAHIKADIPKFKQKNLEQILNEAKIASKNYALGFCLVTSGLGLDDKKLEFICEAATMLRKETPNLMLIACNGSASYESLKELKKVGIFSYNHNLETSREFFPQICTTHSWDDRFNTNLNAKKAGLELCCGGIYGLGESQDDRLSFRASLKELNPFSSPINFFIPNPALKIKQPLLSTDEALEIIRDTAKTLPQCRIMVAGGREIVLGDRQYEILENGASAIVIGDYLTTSGEVASKDIEELRNRGFEFASQCH.

Residues Met-1–Arg-217 form the Radical SAM core domain. Residues Cys-13, Cys-17, and Cys-20 each coordinate [4Fe-4S] cluster. Residues Cys-57, Cys-92, Cys-150, and Arg-217 each contribute to the [2Fe-2S] cluster site.

It belongs to the radical SAM superfamily. Biotin synthase family. As to quaternary structure, homodimer. It depends on [4Fe-4S] cluster as a cofactor. [2Fe-2S] cluster serves as cofactor.

It carries out the reaction (4R,5S)-dethiobiotin + (sulfur carrier)-SH + 2 reduced [2Fe-2S]-[ferredoxin] + 2 S-adenosyl-L-methionine = (sulfur carrier)-H + biotin + 2 5'-deoxyadenosine + 2 L-methionine + 2 oxidized [2Fe-2S]-[ferredoxin]. It participates in cofactor biosynthesis; biotin biosynthesis; biotin from 7,8-diaminononanoate: step 2/2. Catalyzes the conversion of dethiobiotin (DTB) to biotin by the insertion of a sulfur atom into dethiobiotin via a radical-based mechanism. This Campylobacter fetus subsp. fetus (strain 82-40) protein is Biotin synthase.